The primary structure comprises 721 residues: Polyphosphate kinase (721 aa).

An ATP-binding site is contributed by asparagine 54. Arginine 379 and arginine 409 together coordinate Mg(2+). The region spanning 434–468 is the PLD phosphodiesterase domain; the sequence is THLKTHSKIALVVKRIGGELTSFVHLGTGNYNDKT. Histidine 439 acts as the Phosphohistidine intermediate in catalysis. 3 residues coordinate ATP: tyrosine 472, arginine 568, and histidine 596.

It belongs to the polyphosphate kinase 1 (PPK1) family. The cofactor is Mg(2+). An intermediate of this reaction is the autophosphorylated ppk in which a phosphate is covalently linked to a histidine residue through a N-P bond.

It carries out the reaction [phosphate](n) + ATP = [phosphate](n+1) + ADP. Its function is as follows. Catalyzes the reversible transfer of the terminal phosphate of ATP to form a long-chain polyphosphate (polyP). This Staphylococcus haemolyticus (strain JCSC1435) protein is Polyphosphate kinase.